A 599-amino-acid chain; its full sequence is Aspartate--tRNA(Asp/Asn) ligase (599 aa).

Glutamate 174 lines the L-aspartate pocket. The segment at 198–201 (QLFK) is aspartate. Residue arginine 220 participates in L-aspartate binding. ATP contacts are provided by residues 220-222 (RDE) and glutamine 229. An L-aspartate-binding site is contributed by histidine 457. Glutamate 491 serves as a coordination point for ATP. Residue arginine 498 participates in L-aspartate binding. Residue 543–546 (GLDR) coordinates ATP.

Belongs to the class-II aminoacyl-tRNA synthetase family. Type 1 subfamily. In terms of assembly, homodimer.

It is found in the cytoplasm. It carries out the reaction tRNA(Asx) + L-aspartate + ATP = L-aspartyl-tRNA(Asx) + AMP + diphosphate. Aspartyl-tRNA synthetase with relaxed tRNA specificity since it is able to aspartylate not only its cognate tRNA(Asp) but also tRNA(Asn). Reaction proceeds in two steps: L-aspartate is first activated by ATP to form Asp-AMP and then transferred to the acceptor end of tRNA(Asp/Asn). This Paraburkholderia phytofirmans (strain DSM 17436 / LMG 22146 / PsJN) (Burkholderia phytofirmans) protein is Aspartate--tRNA(Asp/Asn) ligase.